A 350-amino-acid chain; its full sequence is Quinone oxidoreductase-like protein 2 (350 aa).

The residue at position 36 (lysine 36) is an N6-acetyllysine. An N6-succinyllysine modification is found at lysine 201. Residues lysine 302 and lysine 328 each carry the N6-acetyllysine modification.

This sequence belongs to the zinc-containing alcohol dehydrogenase family. Quinone oxidoreductase subfamily.

The protein is Quinone oxidoreductase-like protein 2 of Rattus norvegicus (Rat).